Reading from the N-terminus, the 285-residue chain is MQLCGFDVGLDQRFFLIAGTCSIEGLEMSLDVAGQLKEACAPLGIPLIYKGSFDKANRSSGTSKRGVGLDAGLKILDEVRRQLQLPILTDVHDTSHVAEVASVVDVLQTPAFLCRQTDFIRAVAQSGKPVNIKKGQFLAPWDMKNVIDKARAAAREVGLSEDRFLACERGVSFGYNNLVADMTSLAEMRNSGAPVVFDVTHSVQKPGGLGAVSGGARDMVPVLARAGVAVGVAGLFMETHPKPAEAWSDGPNAVPLKHMRALLETLVALDDVTKKNGFLENNFGA.

This sequence belongs to the KdsA family.

Its subcellular location is the cytoplasm. The enzyme catalyses D-arabinose 5-phosphate + phosphoenolpyruvate + H2O = 3-deoxy-alpha-D-manno-2-octulosonate-8-phosphate + phosphate. The protein operates within carbohydrate biosynthesis; 3-deoxy-D-manno-octulosonate biosynthesis; 3-deoxy-D-manno-octulosonate from D-ribulose 5-phosphate: step 2/3. Its pathway is bacterial outer membrane biogenesis; lipopolysaccharide biosynthesis. This Acidovorax sp. (strain JS42) protein is 2-dehydro-3-deoxyphosphooctonate aldolase.